Reading from the N-terminus, the 364-residue chain is Dual-specificity RNA methyltransferase RlmN (364 aa).

E91 acts as the Proton acceptor in catalysis. The Radical SAM core domain maps to 97 to 333; that stretch reads EDDRGTLCVS…VTVRKTRGDD (237 aa). C104 and C338 are oxidised to a cystine. [4Fe-4S] cluster-binding residues include C111, C115, and C118. S-adenosyl-L-methionine-binding positions include 164–165, S196, 218–220, and N295; these read GE and SLH. Catalysis depends on C338, which acts as the S-methylcysteine intermediate.

Belongs to the radical SAM superfamily. RlmN family. Requires [4Fe-4S] cluster as cofactor.

The protein resides in the cytoplasm. It carries out the reaction adenosine(2503) in 23S rRNA + 2 reduced [2Fe-2S]-[ferredoxin] + 2 S-adenosyl-L-methionine = 2-methyladenosine(2503) in 23S rRNA + 5'-deoxyadenosine + L-methionine + 2 oxidized [2Fe-2S]-[ferredoxin] + S-adenosyl-L-homocysteine. The catalysed reaction is adenosine(37) in tRNA + 2 reduced [2Fe-2S]-[ferredoxin] + 2 S-adenosyl-L-methionine = 2-methyladenosine(37) in tRNA + 5'-deoxyadenosine + L-methionine + 2 oxidized [2Fe-2S]-[ferredoxin] + S-adenosyl-L-homocysteine. Functionally, specifically methylates position 2 of adenine 2503 in 23S rRNA and position 2 of adenine 37 in tRNAs. m2A2503 modification seems to play a crucial role in the proofreading step occurring at the peptidyl transferase center and thus would serve to optimize ribosomal fidelity. The sequence is that of Dual-specificity RNA methyltransferase RlmN from Chromobacterium violaceum (strain ATCC 12472 / DSM 30191 / JCM 1249 / CCUG 213 / NBRC 12614 / NCIMB 9131 / NCTC 9757 / MK).